Consider the following 105-residue polypeptide: Ketoisovalerate oxidoreductase subunit VorD (105 aa).

4Fe-4S ferredoxin-type domains are found at residues 44-73 (FMPV…IKED) and 74-103 (GFVA…MVRE). [4Fe-4S] cluster contacts are provided by C53, C56, C59, C63, C83, C86, C89, and C93.

In terms of assembly, heterotetramer of one alpha, one beta, one delta and one gamma chain. The cofactor is [4Fe-4S] cluster.

The catalysed reaction is 3-methyl-2-oxobutanoate + 2 oxidized [2Fe-2S]-[ferredoxin] + CoA = 2-methylpropanoyl-CoA + 2 reduced [2Fe-2S]-[ferredoxin] + CO2 + H(+). The polypeptide is Ketoisovalerate oxidoreductase subunit VorD (vorD) (Pyrococcus abyssi (strain GE5 / Orsay)).